Reading from the N-terminus, the 482-residue chain is Protein DETOXIFICATION 9 (482 aa).

A run of 12 helical transmembrane segments spans residues 32 to 49 (VASM…QYLL), 64 to 84 (ALAG…GVLF), 111 to 131 (FTSI…WMFM), 144 to 164 (IAEL…GYSV), 180 to 200 (PMVL…WLMV), 209 to 229 (GAAA…WVYM), 261 to 281 (AMMC…SGLL), 289 to 309 (SVIS…NGIG), 332 to 352 (AAAA…SLFL), 374 to 394 (ITPI…LSGI), 403 to 423 (IGAY…GLLL), and 435 to 455 (WAGL…VIGF).

The protein belongs to the multi antimicrobial extrusion (MATE) (TC 2.A.66.1) family.

The protein resides in the membrane. The protein is Protein DETOXIFICATION 9 of Arabidopsis thaliana (Mouse-ear cress).